Consider the following 238-residue polypeptide: Insulin-like growth factor-binding protein 6 (238 aa).

The first 25 residues, 1-25 (MTWDGLPTQPLLMLLMLLFAAGSGS), serve as a signal peptide directing secretion. In terms of domain architecture, IGFBP N-terminal spans 26–108 (ALAGCPGCGA…LIGQGRCQRA (83 aa)). 5 disulfide bridges follow: C30–C33, C41–C45, C58–C64, C72–C85, and C79–C105. A disordered region spans residues 104-159 (RCQRARGPSEETTKESKPQGGASRSRDTNHRDRQKNPRTSAAPIRPNPVQDSEMGP). Basic and acidic residues-rich tracts occupy residues 110-120 (GPSEETTKESK) and 127-138 (RSRDTNHRDRQK). One can recognise a Thyroglobulin type-1 domain in the interval 157–232 (MGPCRRHLDS…SPDGQGSTQC (76 aa)). Intrachain disulfides connect C160-C188, C199-C210, and C212-C232. The segment at 218 to 238 (QPLPVSPDGQGSTQCSARSSG) is disordered. A compositionally biased stretch (polar residues) spans 226–238 (GQGSTQCSARSSG).

In terms of assembly, interacts (via C-terminal domain) with PHB2. Post-translationally, O-glycosylated.

Its subcellular location is the secreted. Its function is as follows. IGF-binding proteins prolong the half-life of the IGFs and have been shown to either inhibit or stimulate the growth promoting effects of the IGFs on cell culture. They alter the interaction of IGFs with their cell surface receptors. Activates the MAPK signaling pathway and induces cell migration. The protein is Insulin-like growth factor-binding protein 6 (Igfbp6) of Mus musculus (Mouse).